The chain runs to 258 residues: Ribosomal RNA large subunit methyltransferase E (258 aa).

The S-adenosyl-L-methionine site is built by G58, W60, D78, D96, and D120. K160 acts as the Proton acceptor in catalysis.

Belongs to the class I-like SAM-binding methyltransferase superfamily. RNA methyltransferase RlmE family.

The protein localises to the cytoplasm. It carries out the reaction uridine(2552) in 23S rRNA + S-adenosyl-L-methionine = 2'-O-methyluridine(2552) in 23S rRNA + S-adenosyl-L-homocysteine + H(+). Specifically methylates the uridine in position 2552 of 23S rRNA at the 2'-O position of the ribose in the fully assembled 50S ribosomal subunit. The chain is Ribosomal RNA large subunit methyltransferase E from Methanococcus maripaludis (strain C5 / ATCC BAA-1333).